The primary structure comprises 555 residues: High-affinity gluconate transporter ght3 (555 aa).

Residues 1-9 (MNRFITSIL) lie on the Cytoplasmic side of the membrane. A helical transmembrane segment spans residues 10-30 (VVFISMSGWLQGADTGSISGI). The Extracellular portion of the chain corresponds to 31–58 (LGMRDFQSRFADRYNPISNSYSYSAWRQ). A helical membrane pass occupies residues 59-79 (ALLTGTINAGCLFGAMLSSPF). Over 80 to 87 (TERIGKKY) the chain is Cytoplasmic. Residues 88 to 108 (SICFFSGVYIIAELLLVTAVP) form a helical membrane-spanning segment. Residues 109-112 (SWIQ) lie on the Extracellular side of the membrane. The chain crosses the membrane as a helical span at residues 113-133 (VLVGKILAGVGIGALSVLSPG). Residues 134-144 (YQSEVAPPQIR) lie on the Cytoplasmic side of the membrane. Residues 145–165 (GAVVATYQIFSTGAALVAACI) traverse the membrane as a helical segment. Over 166–179 (NMGTHKLRKTASWR) the chain is Extracellular. Residues 180–200 (TSFGINMLWGILLMVGVLFLP) traverse the membrane as a helical segment. The Cytoplasmic segment spans residues 201–266 (ESPRYLIYKG…IFGKDIRYRT (66 aa)). The helical transmembrane segment at 267–285 (CLGFLVMLFRELIGNNYYF) threads the bilayer. The Extracellular segment spans residues 286-301 (YYATQVFKGTGMTDIF). Residues 302 to 322 (LPAVILGAINFGTTFGALYTI) form a helical membrane-spanning segment. Residues 323–328 (DNLGRR) lie on the Cytoplasmic side of the membrane. The helical transmembrane segment at 329 to 349 (NPLIFGAAFQSICFFIYAAVG) threads the bilayer. At 350–363 (DRKLIYKNGTSDHR) the chain is on the extracellular side. Asparagine 357 is a glycosylation site (N-linked (GlcNAc...) asparagine). A helical transmembrane segment spans residues 364–384 (AGSVMIVFSCLFLFSYCCSWG). Residues 385–404 (PMGWVIVGETFPIRYRSKCA) lie on the Cytoplasmic side of the membrane. Residues 405–425 (SVATSGNWLGNFMISFFTPFI) form a helical membrane-spanning segment. Residues 426-432 (NNAIGFK) are Extracellular-facing. The chain crosses the membrane as a helical span at residues 433-453 (LGYIYACINLFSSFMIFFLAK). At 454–555 (ETKGLTLEEV…FSEDSHPTYI (102 aa)) the chain is on the cytoplasmic side. The span at 492 to 509 (KEEEKREREKSKGIRGQE) shows a compositional bias: basic and acidic residues. Residues 492 to 555 (KEEEKREREK…FSEDSHPTYI (64 aa)) are disordered. The span at 510-521 (EEFIENADEDNN) shows a compositional bias: acidic residues. Over residues 522–534 (DSSSSSGSVVSAV) the composition is skewed to low complexity. The segment covering 545–555 (RFSEDSHPTYI) has biased composition (basic and acidic residues).

It belongs to the major facilitator superfamily. Sugar transporter (TC 2.A.1.1) family.

The protein resides in the membrane. Its function is as follows. High-affinity gluconate transporter. The protein is High-affinity gluconate transporter ght3 (ght3) of Schizosaccharomyces pombe (strain 972 / ATCC 24843) (Fission yeast).